Reading from the N-terminus, the 209-residue chain is uncharacterized protein (209 aa).

The first 17 residues, 1 to 17, serve as a signal peptide directing secretion; the sequence is MKRLVTGLLALSLFLAA. The interval 17–105 is disordered; the sequence is ACGQDSDQQK…SNNQANNNQK (89 aa). The N-palmitoyl cysteine moiety is linked to residue cysteine 18. Cysteine 18 is lipidated: S-diacylglycerol cysteine. The segment covering 23–70 has biased composition (basic and acidic residues); it reads DQQKDGNKEKDDKAKTEQQDKKTNDSSKDKKDNKDDSKDVNKDNKDNS. Positions 71-105 are enriched in low complexity; the sequence is ANDNQQQSNSNATNNDQNQTNNNQSSNNQANNNQK.

The protein localises to the cell membrane. This is an uncharacterized protein from Staphylococcus aureus (strain COL).